A 90-amino-acid polypeptide reads, in one-letter code: MTRMVNCVKMEQELEGLDFPPFPGDLGQKIYENVSKEAWKQWLAQQTILINEYRLSSLDPKAQNFLKEEMQKFLFGGEDLEMPEEFQAID.

This sequence belongs to the Fe(2+)-trafficking protein family.

Could be a mediator in iron transactions between iron acquisition and iron-requiring processes, such as synthesis and/or repair of Fe-S clusters in biosynthetic enzymes. The polypeptide is Probable Fe(2+)-trafficking protein (Hydrogenovibrio crunogenus (strain DSM 25203 / XCL-2) (Thiomicrospira crunogena)).